Here is a 380-residue protein sequence, read N- to C-terminus: Cytochrome b (380 aa).

The next 4 membrane-spanning stretches (helical) occupy residues 34-54 (FGSLLGICLLTQILTGLLLAA), 78-99 (WLLRNLHANGASFFFICIYLHI), 114-134 (WNTGVVLLLTLMATAFVGYVL), and 179-199 (FFALHFLLPFMIAGLTLIHLT). Residues His84 and His98 each coordinate heme b. His183 and His197 together coordinate heme b. His202 contributes to the a ubiquinone binding site. 4 helical membrane passes run 227–247 (LKDILGFMIMLLLLTTLALFH), 289–309 (LGGVLALAASVLILFLIPFLH), 321–341 (LSQLLFWLLVSNLFILTWIGS), and 348–368 (FIIIGQLASTTYFTIILVLFP).

It belongs to the cytochrome b family. As to quaternary structure, the cytochrome bc1 complex contains 11 subunits: 3 respiratory subunits (MT-CYB, CYC1 and UQCRFS1), 2 core proteins (UQCRC1 and UQCRC2) and 6 low-molecular weight proteins (UQCRH/QCR6, UQCRB/QCR7, UQCRQ/QCR8, UQCR10/QCR9, UQCR11/QCR10 and a cleavage product of UQCRFS1). This cytochrome bc1 complex then forms a dimer. Heme b serves as cofactor.

Its subcellular location is the mitochondrion inner membrane. Its function is as follows. Component of the ubiquinol-cytochrome c reductase complex (complex III or cytochrome b-c1 complex) that is part of the mitochondrial respiratory chain. The b-c1 complex mediates electron transfer from ubiquinol to cytochrome c. Contributes to the generation of a proton gradient across the mitochondrial membrane that is then used for ATP synthesis. The polypeptide is Cytochrome b (MT-CYB) (Trogon curucui (Blue-crowned trogon)).